The primary structure comprises 464 residues: Vitamin D3 hydroxylase-associated protein (464 aa).

Residues Lys150 and Ser225 each act as charge relay system in the active site. Catalysis depends on Ser249, which acts as the Acyl-ester intermediate.

This sequence belongs to the amidase family. As to expression, kidney.

Its subcellular location is the mitochondrion inner membrane. Its function is as follows. May have a vitamin D3 hydroxylase regulatory function. This is Vitamin D3 hydroxylase-associated protein from Gallus gallus (Chicken).